The primary structure comprises 173 residues: Co-chaperone protein HscB (173 aa).

A J domain is found at 2-74 (DYFTLFGLPA…LKRAEYMLSL (73 aa)).

This sequence belongs to the HscB family. Interacts with HscA and stimulates its ATPase activity. Interacts with IscU.

Functionally, co-chaperone involved in the maturation of iron-sulfur cluster-containing proteins. Seems to help targeting proteins to be folded toward HscA. This chain is Co-chaperone protein HscB, found in Photorhabdus laumondii subsp. laumondii (strain DSM 15139 / CIP 105565 / TT01) (Photorhabdus luminescens subsp. laumondii).